The chain runs to 242 residues: TGACG-sequence-specific DNA-binding protein TGA-1B (242 aa).

A disordered region spans residues 1-125 (EFCDFSGNQA…HSSPNFENNS (125 aa)). Over residues 18-45 (DTSSPELRQSSSGSDVLNATSSTSSHQV) the composition is skewed to polar residues. Positions 66-79 (EGSRESANDNKGLG) are enriched in basic and acidic residues. Residues 88–125 (SPESQGSGNYGSNVSEGLNYPSDSNKSVHSSPNFENNS) show a composition bias toward polar residues. The 60-residue stretch at 183 to 242 (DEKKRARLVRNRESAQLSRQRKKHYVEELEDKVRIMHSTIQDLNAKVAYIIAENATLKTQ) folds into the bZIP domain. The tract at residues 185–216 (KKRARLVRNRESAQLSRQRKKHYVEELEDKVR) is basic motif. The tract at residues 225 to 239 (LNAKVAYIIAENATL) is leucine-zipper.

Belongs to the bZIP family.

The protein localises to the nucleus. Functionally, binds specifically to the DNA sequence 5'-TGACG-3'. This is TGACG-sequence-specific DNA-binding protein TGA-1B (TGA1B) from Nicotiana tabacum (Common tobacco).